Here is a 146-residue protein sequence, read N- to C-terminus: Hemoglobin subunit beta (146 aa).

At Val-1 the chain carries N-acetylvaline. A Globin domain is found at 2-146; sequence HLTGEEKAAV…VANALAHKYH (145 aa). The residue at position 12 (Thr-12) is a Phosphothreonine. Ser-44 bears the Phosphoserine mark. Lys-59 is subject to N6-acetyllysine. His-63 is a binding site for heme b. Lys-82 is subject to N6-acetyllysine. His-92 serves as a coordination point for heme b. Cys-93 is subject to S-nitrosocysteine. Lys-144 is modified (N6-acetyllysine).

This sequence belongs to the globin family. As to quaternary structure, heterotetramer of two alpha chains and two beta chains. In terms of tissue distribution, red blood cells.

Its function is as follows. Involved in oxygen transport from the lung to the various peripheral tissues. This Ailurus fulgens (Himalayan red panda) protein is Hemoglobin subunit beta (HBB).